A 173-amino-acid polypeptide reads, in one-letter code: Transcription factor E (173 aa).

The HTH TFE/IIEalpha-type domain occupies 9–92 (ADKAIFAYLH…LWELELDNMY (84 aa)).

It belongs to the TFE family. Monomer. Interaction with RNA polymerase subunits RpoF and RpoE is necessary for Tfe stimulatory transcription activity. Able to interact with Tbp and RNA polymerase in the absence of DNA promoter. Interacts both with the preinitiation and elongation complexes.

In terms of biological role, transcription factor that plays a role in the activation of archaeal genes transcribed by RNA polymerase. Facilitates transcription initiation by enhancing TATA-box recognition by TATA-box-binding protein (Tbp), and transcription factor B (Tfb) and RNA polymerase recruitment. Not absolutely required for transcription in vitro, but particularly important in cases where Tbp or Tfb function is not optimal. It dynamically alters the nucleic acid-binding properties of RNA polymerases by stabilizing the initiation complex and destabilizing elongation complexes. Seems to translocate with the RNA polymerase following initiation and acts by binding to the non template strand of the transcription bubble in elongation complexes. The chain is Transcription factor E from Methanospirillum hungatei JF-1 (strain ATCC 27890 / DSM 864 / NBRC 100397 / JF-1).